We begin with the raw amino-acid sequence, 100 residues long: Large ribosomal subunit protein uL23 (100 aa).

Belongs to the universal ribosomal protein uL23 family. In terms of assembly, part of the 50S ribosomal subunit. Contacts protein L29, and trigger factor when it is bound to the ribosome.

In terms of biological role, one of the early assembly proteins it binds 23S rRNA. One of the proteins that surrounds the polypeptide exit tunnel on the outside of the ribosome. Forms the main docking site for trigger factor binding to the ribosome. The chain is Large ribosomal subunit protein uL23 from Shewanella frigidimarina (strain NCIMB 400).